The chain runs to 249 residues: Phycobilisome 27.9 kDa linker polypeptide, phycoerythrin-associated, rod (249 aa).

The PBS-linker domain maps to 2-166 (ASQTILELWP…LDRGPAQIDS (165 aa)). A CpcD-like domain is found at 198–248 (EKRFKILVQGSKFDSPRRISTTEYIVPASKMTPQIQRINRTSGKIVSITEI).

The protein belongs to the phycobilisome linker protein family. As to quaternary structure, the phycobilisome is a hemidiscoidal structure that is composed of two distinct substructures: a core complex and six rods radiating from the core.

The protein localises to the cellular thylakoid membrane. Functionally, rod linker protein, associated with phycoerythrin. Linker polypeptides determine the state of aggregation and the location of the disk-shaped phycobiliprotein units within the phycobilisome and modulate their spectroscopic properties in order to mediate a directed and optimal energy transfer. The chain is Phycobilisome 27.9 kDa linker polypeptide, phycoerythrin-associated, rod (cpeD) from Microchaete diplosiphon (Fremyella diplosiphon).